The following is a 329-amino-acid chain: POU domain, class 5, transcription factor 2 (329 aa).

Polar residues predominate over residues 1 to 14 (MAGRRSSNVFPLSG). The segment at 1 to 24 (MAGRRSSNVFPLSGNSGGGLEVDT) is disordered. The region spanning 107-181 (DVSAIQKEME…LLKMWLEEVD (75 aa)) is the POU-specific domain. The segment at residues 199 to 258 (RKRRRASRERRIGSNLEKLFLQCPEPTPQQISYIAGRLRLQKDLVQVWFSNRSQMGSWPT) is a DNA-binding region (homeobox).

It belongs to the POU transcription factor family. Class-5 subfamily. In adult brain, expressed in the olfactory bulb, becoming specifically concentrated in the mitral cell layer. Also found in the pyramidal cell layer of the hippocampus, in the granule cell layer of the cerebellum and in the cortex.

The protein localises to the nucleus. Transcription factor that binds preferentially to the octamer motif (5'-ATGTTAAT-3'). May exert a regulatory function in meiotic events that are required for terminal differentiation of male germ cell. The chain is POU domain, class 5, transcription factor 2 (Pou5f2) from Mus musculus (Mouse).